Reading from the N-terminus, the 53-residue chain is uncharacterized protein (53 aa).

Residues 18–38 (FLFFIFYFLFFFIFFTVFGNL) traverse the membrane as a helical segment.

It is found in the membrane. This is an uncharacterized protein from Dictyostelium discoideum (Social amoeba).